The primary structure comprises 338 residues: UDP-glucose 4-epimerase (338 aa).

NAD(+) is bound by residues 11 to 12 (YI), 31 to 36 (DNLCNS), 58 to 59 (DI), 80 to 84 (FAGLK), asparagine 99, serine 124, tyrosine 149, lysine 153, and phenylalanine 178. Substrate is bound by residues serine 124 and tyrosine 149. The active-site Proton acceptor is tyrosine 149. Substrate contacts are provided by residues asparagine 179, 199–200 (NL), 216–218 (SVF), arginine 231, and 292–295 (RPGD).

It belongs to the NAD(P)-dependent epimerase/dehydratase family. As to quaternary structure, homodimer. The cofactor is NAD(+).

The catalysed reaction is UDP-alpha-D-glucose = UDP-alpha-D-galactose. Its pathway is carbohydrate metabolism; galactose metabolism. In terms of biological role, involved in the metabolism of galactose. Catalyzes the conversion of UDP-galactose (UDP-Gal) to UDP-glucose (UDP-Glc) through a mechanism involving the transient reduction of NAD. In Pasteurella multocida (strain Pm70), this protein is UDP-glucose 4-epimerase (galE).